The following is a 231-amino-acid chain: ATP phosphoribosyltransferase (231 aa).

It belongs to the ATP phosphoribosyltransferase family. Short subfamily. Heteromultimer composed of HisG and HisZ subunits.

It localises to the cytoplasm. It carries out the reaction 1-(5-phospho-beta-D-ribosyl)-ATP + diphosphate = 5-phospho-alpha-D-ribose 1-diphosphate + ATP. Its pathway is amino-acid biosynthesis; L-histidine biosynthesis; L-histidine from 5-phospho-alpha-D-ribose 1-diphosphate: step 1/9. In terms of biological role, catalyzes the condensation of ATP and 5-phosphoribose 1-diphosphate to form N'-(5'-phosphoribosyl)-ATP (PR-ATP). Has a crucial role in the pathway because the rate of histidine biosynthesis seems to be controlled primarily by regulation of HisG enzymatic activity. The protein is ATP phosphoribosyltransferase of Psychrobacter arcticus (strain DSM 17307 / VKM B-2377 / 273-4).